We begin with the raw amino-acid sequence, 1668 residues long: Chitin synthase chs-2 (1668 aa).

A compositionally biased stretch (basic and acidic residues) spans 1–19 (MMNTLDHRPLGRMETMEGK). Positions 1 to 51 (MMNTLDHRPLGRMETMEGKPDEDEVPTSSNSDAKGKGYYYSSGTVPTDDST) are disordered. Residues 1 to 116 (MMNTLDHRPL…HGFWHDASLQ (116 aa)) lie on the Cytoplasmic side of the membrane. A helical transmembrane segment spans residues 117–137 (VLKLATFLVLFLLTLGSAVVA). The Extracellular portion of the chain corresponds to 138-176 (KSTFILMTSAIGWGGQTITICNQVISEATQNTVKLKNAH). The helical transmembrane segment at 177 to 197 (VVKWVWATLLALSAPEALCFV) threads the bilayer. Residues 198–212 (RSMHRTMFRNVKRPT) lie on the Cytoplasmic side of the membrane. Residues 213–233 (FIQFVFVLIIETFHSIGVGIL) form a helical membrane-spanning segment. Over 234 to 242 (VFRIFPDLD) the chain is Extracellular. A helical transmembrane segment spans residues 243-263 (AVTAAQLTNAMCFVPAILSVI). At 264–271 (SRKPNKSA) the chain is on the cytoplasmic side. Residues 272–292 (LLLVIIDFAAIAAQSSGFWAL) form a helical membrane-spanning segment. Residues 293–301 (PMFLPNLQK) are Extracellular-facing. Residues 302-322 (HLVAIPVSLTLISLAWWQNFV) traverse the membrane as a helical segment. Residues 323–347 (HRDSVFPPVRTLAKFAQRLSERRSK) lie on the Cytoplasmic side of the membrane. A helical membrane pass occupies residues 348 to 368 (TYAFVSLWKICIYVVCCFLFI). The Extracellular segment spans residues 369–487 (SSRMKIEDML…IYSNYVERNQ (119 aa)). Residue Asn-396 is glycosylated (N-linked (GlcNAc...) asparagine). Residues 488–508 (LTMAYDALWLVIFQFGAVFVC) form a helical membrane-spanning segment. The Cytoplasmic segment spans residues 509–522 (YHSSKFACKVMMQR). A helical transmembrane segment spans residues 523-543 (MGFALPMALSVPVTVLLLSTN). Topologically, residues 544–576 (CRMRQKDSCYGTNVLTVELFWQCNGASMSLADF) are extracellular. A helical membrane pass occupies residues 577-597 (ILTPQTWIWLCWLASQFWITI). At 598–1045 (HLWNPKHERL…ISIWYIIYQL (448 aa)) the chain is on the cytoplasmic side. A helical membrane pass occupies residues 1046 to 1066 (VMLISSILGPGTIFVMIIGAI). The Extracellular segment spans residues 1067-1074 (SISFSIDT). Residues 1075 to 1095 (LISLVIVSIPVVVFIVVCLTA) form a helical membrane-spanning segment. Residues 1096-1100 (KPEHQ) are Cytoplasmic-facing. The chain crosses the membrane as a helical span at residues 1101-1121 (LICAQTIGAIFAMLMTAVVVG). The Extracellular segment spans residues 1122 to 1136 (TSLQLQKDGLLSPHS). The helical transmembrane segment at 1137-1157 (MFTVAVATSFLTAAILHPLEF) threads the bilayer. Thr-1158 is a topological domain (cytoplasmic). Residues 1159 to 1179 (CIIPGTIYFLAIPCMYMLLPI) traverse the membrane as a helical segment. At 1180-1375 (YSVCNMHTVS…RAGLIAIRNS (196 aa)) the chain is on the extracellular side. The disordered stretch occupies residues 1192–1216 (TREDPRPTEKNTLAKKTPGNLESGD). Residues 1280 to 1335 (QIDKCSEADEDEQAEIEDALEMSNQSHAAKKNQKWKQAQSEAWLADKALKRAEREY) are a coiled coil. Residue Asn-1303 is glycosylated (N-linked (GlcNAc...) asparagine). The chain crosses the membrane as a helical span at residues 1376-1396 (HTVYFLMINIVFIISVLVLQI). The Cytoplasmic segment spans residues 1397 to 1440 (HKDCLNIEWPLGPKFNHTVRPCYANHDDNQKEEVWVMTRLQLEP). The helical transmembrane segment at 1441–1461 (IGLVFLIFFVSILVIQFLAML) threads the bilayer. Over 1462-1668 (CHRFGTLAHI…SSGDVELRRF (207 aa)) the chain is Extracellular. The interval 1625–1668 (RLFTAQQDQNSPTSDGNRRKSNSRPWDQPTSSATSSGDVELRRF) is disordered. Polar residues-rich tracts occupy residues 1628–1639 (TAQQDQNSPTSD) and 1647–1661 (SRPWDQPTSSATSSG).

Belongs to the chitin synthase family. Class IV subfamily.

The protein localises to the cell membrane. The catalysed reaction is [(1-&gt;4)-N-acetyl-beta-D-glucosaminyl](n) + UDP-N-acetyl-alpha-D-glucosamine = [(1-&gt;4)-N-acetyl-beta-D-glucosaminyl](n+1) + UDP + H(+). Its function is as follows. May be involved in chitin synthesis in the pharynx during larval development. The polypeptide is Chitin synthase chs-2 (Caenorhabditis elegans).